We begin with the raw amino-acid sequence, 133 residues long: Hemoglobin subunit alpha-2 (133 aa).

In terms of domain architecture, Globin spans 1-133 (NVKAVWEHVK…VKNVLTSRYR (133 aa)). His50 contacts O2. Position 79 (His79) interacts with heme b.

Belongs to the globin family. In terms of assembly, minor hemoglobin is a heterotetramer of two alpha-2 chains and two beta-2 chains. As to expression, red blood cells.

Its function is as follows. Involved in oxygen transport from the lung to the various peripheral tissues. The protein is Hemoglobin subunit alpha-2 of Pleurodeles waltl (Iberian ribbed newt).